Consider the following 265-residue polypeptide: tRNA pseudouridine synthase A (265 aa).

The active-site Nucleophile is the Asp53. Residue Tyr111 coordinates substrate.

It belongs to the tRNA pseudouridine synthase TruA family. In terms of assembly, homodimer.

The catalysed reaction is uridine(38/39/40) in tRNA = pseudouridine(38/39/40) in tRNA. Functionally, formation of pseudouridine at positions 38, 39 and 40 in the anticodon stem and loop of transfer RNAs. This chain is tRNA pseudouridine synthase A, found in Acinetobacter baumannii (strain ATCC 17978 / DSM 105126 / CIP 53.77 / LMG 1025 / NCDC KC755 / 5377).